A 758-amino-acid polypeptide reads, in one-letter code: Matrix metalloproteinase-2 (758 aa).

Residues 1–17 form the signal peptide; sequence MFSKYVLATLLALFAQS. His257 contacts Zn(2+). Glu258 is an active-site residue. The Zn(2+) site is built by His261 and His267. Residues 335–514 are disordered; that stretch reads AYWPWNNPSN…HNKPRKPKPD (180 aa). The segment covering 338–348 has biased composition (low complexity); that stretch reads PWNNPSNNPNN. Over residues 349–476 the composition is skewed to basic and acidic residues; that stretch reads DRNRARERQE…EWERRNRNGA (128 aa). Low complexity predominate over residues 479–494; the sequence is PVTPTANTTPRPTNKP. Over residues 499–510 the composition is skewed to basic residues; the sequence is HRQHHHHNKPRK. 4 Hemopexin repeats span residues 513-561, 565-610, 612-659, and 660-707; these read PDSC…WSAL, LTKV…GLPP, LTHI…WSGV, and GYNI…WMQC. The cysteines at positions 516 and 707 are disulfide-linked. The chain crosses the membrane as a helical span at residues 739-756; the sequence is LRINHFILSILLLAIANW. Residues 757–758 lie on the Cytoplasmic side of the membrane; the sequence is RS.

It belongs to the peptidase M10A family. Requires Ca(2+) as cofactor. Zn(2+) serves as cofactor. Widely expressed during embryogenesis including in the mesoderm, developing gut, central and peripheral nervous systems and imaginal disks. In the embryonic nervous system, expressed in neurons and glia. In third instar larvae, strongly expressed in the morphogenetic furrow of eye imaginal disks and in the optic lobe region of the brain. Expressed in posterior follicle cells in all mature stage 14 follicles but not in earlier follicles and is also expressed in some anterior follicle cells that help form dorsal eggshell structures.

The protein resides in the cell membrane. Its function is as follows. Has metalloproteinase activity. Proteolytically cleaves the PGRP-LC receptor; involved in gut-fat body innate immunological communication (GFIC)-mediated activation of the imd/Relish signal transduction pathway. Required for larval tissue histolysis during metamorphosis and is involved in pupal head eversion and fusion of the wing imaginal tissue. Required for growth of the dorsal air sac primordium and development of the dorsal air sacs. Promotes embryonic motor axon fasciculation. Cleaves and activates frac to promote motor axon bundling during outgrowth. Promotes the reshaping of adult sensory neuron dendrites from a radial to lattice-like shape which occurs after eclosion by degrading the basement membrane on which the dendrites grow. Involved in inhibition of follicle stem cell proliferation by cleaving Dlp, inhibiting its interaction with wg and preventing Dlp-mediated spreading of wg to follicle stem cells to enhance their proliferation. Plays a role in wound healing. Involved in fat body dissociation which occurs during metamorphosis by degrading basement membrane components, leading to destruction of cell-basement membrane junctions. Required for posterior follicle cell degradation and ovulation. In Drosophila melanogaster (Fruit fly), this protein is Matrix metalloproteinase-2.